A 476-amino-acid chain; its full sequence is Glycogen synthase (476 aa).

K15 contributes to the ADP-alpha-D-glucose binding site.

The protein belongs to the glycosyltransferase 1 family. Bacterial/plant glycogen synthase subfamily.

The catalysed reaction is [(1-&gt;4)-alpha-D-glucosyl](n) + ADP-alpha-D-glucose = [(1-&gt;4)-alpha-D-glucosyl](n+1) + ADP + H(+). It functions in the pathway glycan biosynthesis; glycogen biosynthesis. Its function is as follows. Synthesizes alpha-1,4-glucan chains using ADP-glucose. The sequence is that of Glycogen synthase from Yersinia pseudotuberculosis serotype O:1b (strain IP 31758).